Reading from the N-terminus, the 425-residue chain is Glutamate-1-semialdehyde 2,1-aminomutase (425 aa).

Lys-266 bears the N6-(pyridoxal phosphate)lysine mark.

It belongs to the class-III pyridoxal-phosphate-dependent aminotransferase family. HemL subfamily. As to quaternary structure, homodimer. The cofactor is pyridoxal 5'-phosphate.

It localises to the cytoplasm. The enzyme catalyses (S)-4-amino-5-oxopentanoate = 5-aminolevulinate. The protein operates within porphyrin-containing compound metabolism; protoporphyrin-IX biosynthesis; 5-aminolevulinate from L-glutamyl-tRNA(Glu): step 2/2. The chain is Glutamate-1-semialdehyde 2,1-aminomutase from Nitratidesulfovibrio vulgaris (strain DSM 19637 / Miyazaki F) (Desulfovibrio vulgaris).